The primary structure comprises 561 residues: Methyl-accepting chemotaxis protein CtpM (561 aa).

Topologically, residues 1–11 (MMRLTLKSKVL) are cytoplasmic. The helical transmembrane segment at 12–32 (LLAMVPVLLFALVLSGGAVLI) threads the bilayer. At 33–205 (LKKQADAEVK…KQDIDERIGT (173 aa)) the chain is on the periplasmic side. A helical membrane pass occupies residues 206–226 (LIASIVGIAGVLLVVLLVIGL). At 227-561 (AVANAMLRPL…LGRLVGQFRI (335 aa)) the chain is on the cytoplasmic side. In terms of domain architecture, HAMP spans 230–284 (NAMLRPLHQIRQNLDDIAAGEGDLTRRLPVTSYDELGELAGSFNRFVEKIHGLVR). The region spanning 289–525 (MTGDLKQLVE…EINRSVHQIA (237 aa)) is the Methyl-accepting transducer domain. The segment at 333–357 (HEVAQSAQRAAEAAQQTDHEGQAAK) is disordered. Over residues 336-348 (AQSAQRAAEAAQQ) the composition is skewed to low complexity.

The protein belongs to the methyl-accepting chemotaxis (MCP) protein family. As to quaternary structure, homodimer. The ligand-binding domain (LBD) is dimeric in the presence and the absence of ligands.

The protein localises to the cell inner membrane. Functionally, chemotactic-signal transducers respond to changes in the concentration of attractants and repellents in the environment, transduce a signal from the outside to the inside of the cell, and facilitate sensory adaptation through the variation of the level of methylation. Directly recognizes five C4-dicarboxylic acids: L-malic, citramalic, citraconic, bromosuccinic and methylsuccinic acids. Three of the identified ligands act as chemoattractants (L-malic, D,L-bromosuccinic and L-citramalic acids) whereas two of them (L-methylsuccinic and citraconic acids) behave as antagonists by inhibiting the downstream chemotaxis signaling cascade. Antagonists compete with chemoattractants, thereby decreasing the affinity for chemoattractants and the subsequent chemotactic response. Acts through the che chemosensory pathway. The protein is Methyl-accepting chemotaxis protein CtpM of Pseudomonas aeruginosa (strain ATCC 15692 / DSM 22644 / CIP 104116 / JCM 14847 / LMG 12228 / 1C / PRS 101 / PAO1).